Consider the following 589-residue polypeptide: Aspartate--tRNA(Asp/Asn) ligase (589 aa).

E172 is an L-aspartate binding site. The segment at 196-199 (QLFK) is aspartate. R218 provides a ligand contact to L-aspartate. ATP is bound by residues 218-220 (RDE) and Q227. H449 contacts L-aspartate. E483 provides a ligand contact to ATP. R490 contributes to the L-aspartate binding site. 535-538 (GVDR) lines the ATP pocket.

This sequence belongs to the class-II aminoacyl-tRNA synthetase family. Type 1 subfamily. In terms of assembly, homodimer.

The protein localises to the cytoplasm. The enzyme catalyses tRNA(Asx) + L-aspartate + ATP = L-aspartyl-tRNA(Asx) + AMP + diphosphate. In terms of biological role, aspartyl-tRNA synthetase with relaxed tRNA specificity since it is able to aspartylate not only its cognate tRNA(Asp) but also tRNA(Asn). Reaction proceeds in two steps: L-aspartate is first activated by ATP to form Asp-AMP and then transferred to the acceptor end of tRNA(Asp/Asn). This Francisella philomiragia subsp. philomiragia (strain ATCC 25017 / CCUG 19701 / FSC 153 / O#319-036) protein is Aspartate--tRNA(Asp/Asn) ligase.